Reading from the N-terminus, the 600-residue chain is 1-deoxy-D-xylulose-5-phosphate synthase (600 aa).

Thiamine diphosphate contacts are provided by residues histidine 57 and 98–100 (GHA). Aspartate 125 serves as a coordination point for Mg(2+). Thiamine diphosphate is bound by residues 126–127 (AS), asparagine 155, tyrosine 264, and glutamate 343. Asparagine 155 contributes to the Mg(2+) binding site.

Belongs to the transketolase family. DXPS subfamily. Homodimer. Mg(2+) is required as a cofactor. The cofactor is thiamine diphosphate.

The catalysed reaction is D-glyceraldehyde 3-phosphate + pyruvate + H(+) = 1-deoxy-D-xylulose 5-phosphate + CO2. It participates in metabolic intermediate biosynthesis; 1-deoxy-D-xylulose 5-phosphate biosynthesis; 1-deoxy-D-xylulose 5-phosphate from D-glyceraldehyde 3-phosphate and pyruvate: step 1/1. Functionally, catalyzes the acyloin condensation reaction between C atoms 2 and 3 of pyruvate and glyceraldehyde 3-phosphate to yield 1-deoxy-D-xylulose-5-phosphate (DXP). This is 1-deoxy-D-xylulose-5-phosphate synthase from Fusobacterium nucleatum subsp. nucleatum (strain ATCC 25586 / DSM 15643 / BCRC 10681 / CIP 101130 / JCM 8532 / KCTC 2640 / LMG 13131 / VPI 4355).